Here is a 205-residue protein sequence, read N- to C-terminus: MKLIREFYSRDTIVVAKELLGKVLVHEVNGIRTSGKIVEVEAYRGINDKGAHAYGGRRTPRTEALYGPAGHAYVYFIYGLYYCMNVVAMQEGIPEGVLIRAIEPIEGIEVMSERRFKKLFNDLTKYQLKNLTNGPSKLCSAMEIRREQNLMDLNGDELYIEEGKNESFEIVEAKRVGIDYAEEAKDYLWRFYIKGNKCVSVLKKD.

The protein belongs to the DNA glycosylase MPG family.

This Clostridium acetobutylicum (strain ATCC 824 / DSM 792 / JCM 1419 / IAM 19013 / LMG 5710 / NBRC 13948 / NRRL B-527 / VKM B-1787 / 2291 / W) protein is Putative 3-methyladenine DNA glycosylase.